Reading from the N-terminus, the 403-residue chain is S-adenosylmethionine synthase (403 aa).

H14 serves as a coordination point for ATP. A Mg(2+)-binding site is contributed by D16. K(+) is bound at residue E42. Positions 55 and 99 each coordinate L-methionine. Residues 99–109 (QSPEIAEGVDH) form a flexible loop region. ATP-binding positions include 180 to 182 (DAK), 250 to 251 (RF), D259, 265 to 266 (RK), A282, and K286. D259 is a binding site for L-methionine. Position 290 (K290) interacts with L-methionine.

The protein belongs to the AdoMet synthase family. In terms of assembly, homotetramer; dimer of dimers. Requires Mg(2+) as cofactor. It depends on K(+) as a cofactor.

The protein localises to the cytoplasm. It carries out the reaction L-methionine + ATP + H2O = S-adenosyl-L-methionine + phosphate + diphosphate. It participates in amino-acid biosynthesis; S-adenosyl-L-methionine biosynthesis; S-adenosyl-L-methionine from L-methionine: step 1/1. In terms of biological role, catalyzes the formation of S-adenosylmethionine (AdoMet) from methionine and ATP. The overall synthetic reaction is composed of two sequential steps, AdoMet formation and the subsequent tripolyphosphate hydrolysis which occurs prior to release of AdoMet from the enzyme. This is S-adenosylmethionine synthase from Deinococcus deserti (strain DSM 17065 / CIP 109153 / LMG 22923 / VCD115).